The following is a 168-amino-acid chain: Peptidoglycan-associated lipoprotein (168 aa).

Positions 1-24 are cleaved as a signal peptide; it reads MRRIQSIARSPIAIALFMSLAVAG. C25 is lipidated: N-palmitoyl cysteine. C25 is lipidated: S-diacylglycerol cysteine. An OmpA-like domain is found at 51–167; sequence QDFTVNVGDR…RAVTVLNGAG (117 aa).

This sequence belongs to the Pal lipoprotein family. The Tol-Pal system is composed of five core proteins: the inner membrane proteins TolA, TolQ and TolR, the periplasmic protein TolB and the outer membrane protein Pal. They form a network linking the inner and outer membranes and the peptidoglycan layer. The N-terminus is blocked.

It localises to the cell outer membrane. Part of the Tol-Pal system, which plays a role in outer membrane invagination during cell division and is important for maintaining outer membrane integrity. The sequence is that of Peptidoglycan-associated lipoprotein from Brucella abortus biovar 1 (strain 9-941).